Consider the following 321-residue polypeptide: Peroxidase 27 (321 aa).

The N-terminal stretch at 1-23 (MAASKRLVVSCLFLVLLFAQANS) is a signal peptide. 4 disulfide bridges follow: C35–C113, C68–C73, C119–C317, and C196–C228. The active-site Proton acceptor is the H66. Positions 67, 70, 72, 74, and 76 each coordinate Ca(2+). P159 contributes to the substrate binding site. N-linked (GlcNAc...) asparagine glycosylation occurs at N164. Position 189 (H189) interacts with heme b. T190 serves as a coordination point for Ca(2+). An N-linked (GlcNAc...) asparagine glycan is attached at N205. Ca(2+) is bound by residues D240, S243, and D248.

The protein belongs to the peroxidase family. Classical plant (class III) peroxidase subfamily. Heme b serves as cofactor. Requires Ca(2+) as cofactor. As to expression, expressed in the whole plant, but preferentially in roots and flowers.

Its subcellular location is the secreted. The catalysed reaction is 2 a phenolic donor + H2O2 = 2 a phenolic radical donor + 2 H2O. Removal of H(2)O(2), oxidation of toxic reductants, biosynthesis and degradation of lignin, suberization, auxin catabolism, response to environmental stresses such as wounding, pathogen attack and oxidative stress. These functions might be dependent on each isozyme/isoform in each plant tissue. The chain is Peroxidase 27 (PER27) from Arabidopsis thaliana (Mouse-ear cress).